The chain runs to 278 residues: MVYNPTATFHKKTLTRMKTGLGSNGDILFIQTRALRDQLSSSFRFVYSNGPFFSDPGPGVLPVYKDAGPFRSWLRRPLQNRAQEPRLHMEAIRKCLEGTMKEDEQSGASGQWVGLMGFSQGARLAASVLFESQRRQNIQEKGGIVRGYEGDNIETKLWDQRWQFAVLFSGPAPLIAFCPENDHLSSQSTAEHDPMYRALDNVNCSGELHITKPTLHVIGVKDEWAPSQRELYEKYCSKESSTLVEWEGAHRIPIESSIVKDLCARILVMSKQADFVES.

Residues Ser119, Asp222, and His250 each act as charge relay system in the active site.

Belongs to the LovG family.

It functions in the pathway mycotoxin biosynthesis. Its function is as follows. Probable esterase; part of the Tox1A locus, one of the 2 loci that mediate the biosynthesis of T-toxin, a family of linear polyketides 37 to 45 carbons in length, of which the major component is 41 carbons, and which leads to high virulence to maize. One of the PKSs (PKS1 or PKS2) could synthesize a precursor, used subsequently by the other PKS as starter unit, to add additional carbons. Variability in the length of the final carbon backbone C35-47 could be achieved by varying the number of condensation cycles, or use of different starter or extender units or might be due to decarboxylation of the penultimate product, catalyzed by DEC1. Additional proteins are required for the biosynthesis of T-toxin, including oxidoreductases RED1, RED2, RED3, LAM1 and OXI1, as well as esterase TOX9. The polypeptide is Probable esterase TOX9 (Cochliobolus heterostrophus (strain C4 / ATCC 48331 / race T) (Southern corn leaf blight fungus)).